We begin with the raw amino-acid sequence, 117 residues long: Ig heavy chain V region 5-84 (117 aa).

An N-terminal signal peptide occupies residues 1–19 (MNFGLSLIFLVLVLKGVLC). The framework-1 stretch occupies residues 20 to 49 (EVKLVESGGGLVQPGGSLKLSCAASGFTFS). Residues C41 and C115 are joined by a disulfide bond. The complementarity-determining-1 stretch occupies residues 50-54 (SYTMS). A framework-2 region spans residues 55–68 (WVRQTPEKRLEWVA). Residues 69–85 (YISNGGGSTYYPDTVKG) are complementarity-determining-2. Residues 86 to 117 (RFTISRDNAKNNLYLQMSSLKSEDTAMYYCAR) form a framework-3 region.

This chain is Ig heavy chain V region 5-84, found in Mus musculus (Mouse).